A 222-amino-acid polypeptide reads, in one-letter code: Glutathione S-transferase alpha-2 (222 aa).

One can recognise a GST N-terminal domain in the interval Gly3–Gly83. Lys4 carries the N6-succinyllysine modification. Glutathione contacts are provided by residues Tyr9, Lys45, Gln54–Val55, and Gln67–Thr68. The 124-residue stretch at Asp85 to Met208 folds into the GST C-terminal domain.

Belongs to the GST superfamily. Alpha family. In terms of assembly, homodimer or heterodimer of GSTA1 and GSTA2.

It localises to the cytoplasm. The enzyme catalyses RX + glutathione = an S-substituted glutathione + a halide anion + H(+). Its function is as follows. Catalyzes the conjugation of glutathione to a large variety of electrophilic compounds. The protein is Glutathione S-transferase alpha-2 (Gsta2) of Rattus norvegicus (Rat).